The following is a 44-amino-acid chain: MESPAFFFSLFVWCLLLSITAYSLYVGFGPPSKQLRDPFEEHED.

The chain crosses the membrane as a helical span at residues 6–26 (FFFSLFVWCLLLSITAYSLYV).

The protein belongs to the PsbN family.

Its subcellular location is the plastid. It localises to the chloroplast thylakoid membrane. Its function is as follows. May play a role in photosystem I and II biogenesis. This is Protein PsbN from Tupiella akineta (Green alga).